Here is a 205-residue protein sequence, read N- to C-terminus: Recombination protein RecR (205 aa).

The segment at 64–79 adopts a C4-type zinc-finger fold; sequence CRRCFNITVDELCPIC. In terms of domain architecture, Toprim spans 87–182; the sequence is TKICVVEEPL…RVTRPARGLP (96 aa).

Belongs to the RecR family.

May play a role in DNA repair. It seems to be involved in an RecBC-independent recombinational process of DNA repair. It may act with RecF and RecO. The polypeptide is Recombination protein RecR (Chloroflexus aggregans (strain MD-66 / DSM 9485)).